The sequence spans 130 residues: MSMQDPISDMLTRLRNGQTAKKVAVKMPSSKQKVAIAALLKEEGFVAEFTVTGDVKPELEVTLKYFEANPVIEQIQRVSRPGLRIYKKKDALPSVMGGLGIAVVSTSKGLMTDRAARKAGLGGEIICYVA.

The protein belongs to the universal ribosomal protein uS8 family. Part of the 30S ribosomal subunit. Contacts proteins S5 and S12.

One of the primary rRNA binding proteins, it binds directly to 16S rRNA central domain where it helps coordinate assembly of the platform of the 30S subunit. In Photobacterium profundum (strain SS9), this protein is Small ribosomal subunit protein uS8.